A 212-amino-acid chain; its full sequence is Uridine kinase (212 aa).

13–20 lines the ATP pocket; sequence GASASGKS.

Belongs to the uridine kinase family.

It is found in the cytoplasm. It catalyses the reaction uridine + ATP = UMP + ADP + H(+). The enzyme catalyses cytidine + ATP = CMP + ADP + H(+). It participates in pyrimidine metabolism; CTP biosynthesis via salvage pathway; CTP from cytidine: step 1/3. The protein operates within pyrimidine metabolism; UMP biosynthesis via salvage pathway; UMP from uridine: step 1/1. In Shewanella halifaxensis (strain HAW-EB4), this protein is Uridine kinase.